Reading from the N-terminus, the 155-residue chain is Transcriptional repressor NrdR (155 aa).

A disordered region spans residues 1-22 (MRCPFCGHDETQVKDSRPSEDG). A zinc finger lies at 3 to 34 (CPFCGHDETQVKDSRPSEDGAAIRRRRLCPQC). A compositionally biased stretch (basic and acidic residues) spans 7-22 (GHDETQVKDSRPSEDG). An ATP-cone domain is found at 49–139 (ITILKRSGRR…VYRDFRETQD (91 aa)).

The protein belongs to the NrdR family. The cofactor is Zn(2+).

In terms of biological role, negatively regulates transcription of bacterial ribonucleotide reductase nrd genes and operons by binding to NrdR-boxes. In Phenylobacterium zucineum (strain HLK1), this protein is Transcriptional repressor NrdR.